The primary structure comprises 243 residues: Small ribosomal subunit protein uS3 (243 aa).

The 69-residue stretch at 38-106 folds into the KH type-2 domain; it reads IRKYLNARLA…DIQINIFEVK (69 aa). Positions 217–243 are disordered; that stretch reads TQTKESGRGGNGNNNGGKNFKRKKNNR.

Belongs to the universal ribosomal protein uS3 family. As to quaternary structure, part of the 30S ribosomal subunit. Forms a tight complex with proteins S10 and S14.

Binds the lower part of the 30S subunit head. Binds mRNA in the 70S ribosome, positioning it for translation. The protein is Small ribosomal subunit protein uS3 of Phocaeicola vulgatus (strain ATCC 8482 / DSM 1447 / JCM 5826 / CCUG 4940 / NBRC 14291 / NCTC 11154) (Bacteroides vulgatus).